We begin with the raw amino-acid sequence, 423 residues long: AP-1 complex subunit mu-1 (423 aa).

Ser2 carries the post-translational modification N-acetylserine. Phosphothreonine occurs at positions 152, 154, and 223. One can recognise an MHD domain in the interval 168–421 (KNEVFLDVIE…ITQNGDYQLR (254 aa)).

This sequence belongs to the adaptor complexes medium subunit family. Adaptor protein complex 1 (AP-1) is a heterotetramer composed of two large adaptins (gamma-type subunit AP1G1 and beta-type subunit AP1B1), a medium adaptin (mu-type subunit AP1M1 or AP1M2) and a small adaptin (sigma-type subunit AP1S1 or AP1S2 or AP1S3). Interacts with MARCHF11. In terms of processing, phosphorylation of membrane-bound AP1M1/AP1M2 increases its affinity for sorting signals.

It is found in the cytoplasmic vesicle. It localises to the clathrin-coated vesicle membrane. The protein localises to the golgi apparatus. Functionally, subunit of clathrin-associated adaptor protein complex 1 that plays a role in protein sorting in the trans-Golgi network (TGN) and endosomes. The AP complexes mediate the recruitment of clathrin to membranes and the recognition of sorting signals within the cytosolic tails of transmembrane cargo molecules. This chain is AP-1 complex subunit mu-1, found in Bos taurus (Bovine).